The following is a 346-amino-acid chain: Uroporphyrinogen decarboxylase (346 aa).

Substrate-binding positions include R26 to R30, D76, Y153, S208, and H323.

It belongs to the uroporphyrinogen decarboxylase family. Homodimer.

It is found in the cytoplasm. The catalysed reaction is uroporphyrinogen III + 4 H(+) = coproporphyrinogen III + 4 CO2. The protein operates within porphyrin-containing compound metabolism; protoporphyrin-IX biosynthesis; coproporphyrinogen-III from 5-aminolevulinate: step 4/4. Catalyzes the decarboxylation of four acetate groups of uroporphyrinogen-III to yield coproporphyrinogen-III. This Prochlorococcus marinus (strain MIT 9312) protein is Uroporphyrinogen decarboxylase.